The primary structure comprises 470 residues: Uronate isomerase (470 aa).

The protein belongs to the metallo-dependent hydrolases superfamily. Uronate isomerase family.

It catalyses the reaction D-glucuronate = D-fructuronate. It carries out the reaction aldehydo-D-galacturonate = keto-D-tagaturonate. The protein operates within carbohydrate metabolism; pentose and glucuronate interconversion. In Vibrio vulnificus (strain CMCP6), this protein is Uronate isomerase.